The primary structure comprises 455 residues: uncharacterized protein (455 aa).

11 helical membrane passes run 26-46 (FGPG…QLLI), 53-73 (GAWG…ISIG), 77-97 (LGVM…RSTA), 111-131 (WVVA…LAVI), 146-166 (ALRA…TGVW), 191-211 (AAGV…SLVV), 232-252 (LTVL…AIAV), 256-276 (AHIG…IPAL), 278-298 (ILAA…LIVG), 323-343 (LLVA…GGGG), and 357-377 (ALVL…VVIA). Positions 384-455 (PKRLRPAPPV…LSDEPPPRAD (72 aa)) are disordered.

The protein resides in the cell membrane. This is an uncharacterized protein from Mycobacterium tuberculosis (strain CDC 1551 / Oshkosh).